Reading from the N-terminus, the 152-residue chain is Deoxyuridine 5'-triphosphate nucleotidohydrolase (152 aa).

Substrate-binding positions include 63-65 (RSG), asparagine 76, and 80-82 (TID). The interval 129-152 (LDDTERGQGGYGSTGVSAMPPVDG) is disordered.

Belongs to the dUTPase family. Requires Mg(2+) as cofactor.

It carries out the reaction dUTP + H2O = dUMP + diphosphate + H(+). It participates in pyrimidine metabolism; dUMP biosynthesis; dUMP from dCTP (dUTP route): step 2/2. This enzyme is involved in nucleotide metabolism: it produces dUMP, the immediate precursor of thymidine nucleotides and it decreases the intracellular concentration of dUTP so that uracil cannot be incorporated into DNA. The chain is Deoxyuridine 5'-triphosphate nucleotidohydrolase from Cutibacterium acnes (strain DSM 16379 / KPA171202) (Propionibacterium acnes).